A 147-amino-acid polypeptide reads, in one-letter code: Transcriptional regulator MraZ (147 aa).

SpoVT-AbrB domains are found at residues 5-52 and 81-124; these read SHAI…PETE and ATTL…SEEA.

This sequence belongs to the MraZ family. In terms of assembly, forms oligomers.

It localises to the cytoplasm. The protein resides in the nucleoid. The polypeptide is Transcriptional regulator MraZ (Saccharophagus degradans (strain 2-40 / ATCC 43961 / DSM 17024)).